Here is a 399-residue protein sequence, read N- to C-terminus: Serine/threonine-protein kinase PKZ1 (399 aa).

Positions 30–50 (PMQCAYQTQSHSNPEGAKRGR) are disordered. A Protein kinase domain is found at 92–371 (WQLFDQIGAG…ADQMLQHPWM (280 aa)). ATP is bound by residues 98–106 (IGAGAFGVV) and Lys121. The active-site Proton acceptor is Asp219.

It belongs to the protein kinase superfamily. CAMK Ser/Thr protein kinase family. As to quaternary structure, interacts with BZP1.

It carries out the reaction L-seryl-[protein] + ATP = O-phospho-L-seryl-[protein] + ADP + H(+). The enzyme catalyses L-threonyl-[protein] + ATP = O-phospho-L-threonyl-[protein] + ADP + H(+). May regulate an early stage of the zoospore pathway. This chain is Serine/threonine-protein kinase PKZ1, found in Phytophthora infestans (Potato late blight agent).